A 167-amino-acid polypeptide reads, in one-letter code: Lipoprotein signal peptidase (167 aa).

The next 3 helical transmembrane spans lie at 9-29 (AWLYLSIAVSVFLLDIITKNL), 68-88 (LPLLLITPVIALIITFLYALY), and 98-118 (MGLIGGGALGNLYDRLFLGMV). Residues Asp-120 and Asp-138 contribute to the active site. A helical transmembrane segment spans residues 130–150 (YWPAFNIADASISIGIALLIL).

Belongs to the peptidase A8 family.

It is found in the cell inner membrane. It catalyses the reaction Release of signal peptides from bacterial membrane prolipoproteins. Hydrolyzes -Xaa-Yaa-Zaa-|-(S,diacylglyceryl)Cys-, in which Xaa is hydrophobic (preferably Leu), and Yaa (Ala or Ser) and Zaa (Gly or Ala) have small, neutral side chains.. Its pathway is protein modification; lipoprotein biosynthesis (signal peptide cleavage). Functionally, this protein specifically catalyzes the removal of signal peptides from prolipoproteins. The polypeptide is Lipoprotein signal peptidase (Aquifex aeolicus (strain VF5)).